A 355-amino-acid chain; its full sequence is UDP-N-acetylglucosamine--N-acetylmuramyl-(pentapeptide) pyrophosphoryl-undecaprenol N-acetylglucosamine transferase (355 aa).

UDP-N-acetyl-alpha-D-glucosamine-binding positions include 15-17 (TGG), Asn127, Arg163, Ser191, Ile244, 263-268 (ALTVSE), and Gln288.

It belongs to the glycosyltransferase 28 family. MurG subfamily.

It is found in the cell inner membrane. The catalysed reaction is di-trans,octa-cis-undecaprenyl diphospho-N-acetyl-alpha-D-muramoyl-L-alanyl-D-glutamyl-meso-2,6-diaminopimeloyl-D-alanyl-D-alanine + UDP-N-acetyl-alpha-D-glucosamine = di-trans,octa-cis-undecaprenyl diphospho-[N-acetyl-alpha-D-glucosaminyl-(1-&gt;4)]-N-acetyl-alpha-D-muramoyl-L-alanyl-D-glutamyl-meso-2,6-diaminopimeloyl-D-alanyl-D-alanine + UDP + H(+). Its pathway is cell wall biogenesis; peptidoglycan biosynthesis. Cell wall formation. Catalyzes the transfer of a GlcNAc subunit on undecaprenyl-pyrophosphoryl-MurNAc-pentapeptide (lipid intermediate I) to form undecaprenyl-pyrophosphoryl-MurNAc-(pentapeptide)GlcNAc (lipid intermediate II). This chain is UDP-N-acetylglucosamine--N-acetylmuramyl-(pentapeptide) pyrophosphoryl-undecaprenol N-acetylglucosamine transferase, found in Salmonella enteritidis PT4 (strain P125109).